The primary structure comprises 408 residues: Glutamate N-acetyltransferase (408 aa).

Residues Thr150, Lys176, Thr189, Glu271, Asn403, and Thr408 each contribute to the substrate site. Thr189 acts as the Nucleophile in catalysis.

This sequence belongs to the ArgJ family. Heterotetramer of two alpha and two beta chains.

It localises to the cytoplasm. The catalysed reaction is N(2)-acetyl-L-ornithine + L-glutamate = N-acetyl-L-glutamate + L-ornithine. Its pathway is amino-acid biosynthesis; L-arginine biosynthesis; L-ornithine and N-acetyl-L-glutamate from L-glutamate and N(2)-acetyl-L-ornithine (cyclic): step 1/1. Its function is as follows. Catalyzes the transfer of the acetyl group from N(2)-acetylornithine to glutamate, forming N-acetylglutamate and L-ornithine. This Methanococcus vannielii (strain ATCC 35089 / DSM 1224 / JCM 13029 / OCM 148 / SB) protein is Glutamate N-acetyltransferase.